The primary structure comprises 347 residues: Autoinducer 2 import system permease protein LsrC (347 aa).

9 helical membrane-spanning segments follow: residues 14-34 (LLAI…YLSV), 39-59 (MVFS…MVML), 72-92 (GMCA…PVAC), 93-113 (LATL…VAWL), 115-135 (IPAI…MLLW), 155-175 (VFLG…LMAW), 213-233 (LNGG…GFIP), 249-269 (VLGG…ILGA), and 284-304 (IPAW…LVFD).

The protein belongs to the binding-protein-dependent transport system permease family. AraH/RbsC subfamily. As to quaternary structure, the complex is composed of two ATP-binding proteins (LsrA), two transmembrane proteins (LsrC and LsrD) and a solute-binding protein (LsrB).

Its subcellular location is the cell inner membrane. Part of the ABC transporter complex LsrABCD involved in autoinducer 2 (AI-2) import. Probably responsible for the translocation of the substrate across the membrane. This Salmonella paratyphi A (strain ATCC 9150 / SARB42) protein is Autoinducer 2 import system permease protein LsrC (lsrC).